Reading from the N-terminus, the 69-residue chain is Peptide Hact-1 (69 aa).

The first 21 residues, 1-21, serve as a signal peptide directing secretion; the sequence is MDRKFHLCLLLVILGTIIVQG. Positions 22 to 57 are excised as a propeptide; sequence APLENENDADPDKPQKYRYYLKRATTEKKDNDPAKP. An intrachain disulfide couples C59 to C68.

In terms of tissue distribution, tentacle (ecto and/or endoderm tissue), and possibly also nematoblasts.

It localises to the secreted. The protein localises to the nematocyst. In terms of biological role, peptide with unknown function. Has a limited effect on human peripheral blood mononuclear cells. Does not show activity against both Gram-positive and Gram-negative bacteria nor is it active on the 26 voltage-gated ion channels tested. This Heliofungia actiniformis (Mushroom coral) protein is Peptide Hact-1.